Reading from the N-terminus, the 347-residue chain is MGPDQEGLTYKAAGVDIDAGNELVDRIRDDVKRTMRPGVLGGLGGFGGLFEVPVDRYRRPVLVSGTDGVGTKLKLAIETGRHDGIGIDLVAMCANDVLVTGAEPLYFLDYYATGRLDVEVAAAVIRGIAEGCHQAGAALIGGETAEMPGMYAEGHYDLAGFCVGVVEKDEIIDGSRVGAGDALIALAASGPHSNGYSLIRKVLERAPEGAATEVDGQPVADLLMAPTRIYAKPVLDLIRNLPVHAMAHITGGGLPENLPRVLPEGLGAKLQPWSWPPVFRWLQQTGQIAEAEMLRTFNCGVGMVLVVPAEQADAALQRLRQTGETAWRLGEIGTHEAGAPRVQVVAA.

The protein belongs to the AIR synthase family.

It localises to the cytoplasm. It carries out the reaction 2-formamido-N(1)-(5-O-phospho-beta-D-ribosyl)acetamidine + ATP = 5-amino-1-(5-phospho-beta-D-ribosyl)imidazole + ADP + phosphate + H(+). It functions in the pathway purine metabolism; IMP biosynthesis via de novo pathway; 5-amino-1-(5-phospho-D-ribosyl)imidazole from N(2)-formyl-N(1)-(5-phospho-D-ribosyl)glycinamide: step 2/2. In Alkalilimnicola ehrlichii (strain ATCC BAA-1101 / DSM 17681 / MLHE-1), this protein is Phosphoribosylformylglycinamidine cyclo-ligase.